A 291-amino-acid polypeptide reads, in one-letter code: Glycinyltransferase (291 aa).

The active site involves glutamate 243.

Belongs to the thymidine aminotransferase family.

The enzyme catalyses 5-phosphomethyl-dUMP in DNA + glycine = 5-N(alpha)-glycyl-dTMP in DNA + phosphate. In terms of biological role, transfers glycine to 5-phosphomethyl-2'-deoxyuridine (5-PmdU) to produce 5-Nalpha-glycinylthymidine (Nalpha-GlyT) as a step in the pathway leading to thymidine hypermodifications in the viral genome. As a final result of the pathway of hypermodification, 5-aminoethyl-2'-deoxyuridine (5-NedU) substitutes for about 30% of thymidines in the viral DNA. These modifications probably prevent degradation of viral genome by the host restriction-modification antiviral defense system. This chain is Glycinyltransferase, found in Pseudomonas phage M6.